A 215-amino-acid polypeptide reads, in one-letter code: Small ribosomal subunit protein uS3 (215 aa).

One can recognise a KH type-2 domain in the interval 38–107; the sequence is IRDYIKKTYH…KFQLNIEEVK (70 aa).

Belongs to the universal ribosomal protein uS3 family. Part of the 30S ribosomal subunit. Forms a tight complex with proteins S10 and S14.

Its function is as follows. Binds the lower part of the 30S subunit head. Binds mRNA in the 70S ribosome, positioning it for translation. The protein is Small ribosomal subunit protein uS3 of Kosmotoga olearia (strain ATCC BAA-1733 / DSM 21960 / TBF 19.5.1).